We begin with the raw amino-acid sequence, 245 residues long: Probable transcriptional regulatory protein TP_0474 (245 aa).

It belongs to the TACO1 family.

The protein localises to the cytoplasm. This chain is Probable transcriptional regulatory protein TP_0474, found in Treponema pallidum (strain Nichols).